The following is a 601-amino-acid chain: Deuterosome assembly protein 1 (601 aa).

Coiled-coil stretches lie at residues 14-59 (CEAE…NAQT), 86-196 (TQNY…GKKQ), and 226-277 (IEKL…ELQS). The segment at 305–329 (AQDNRKRVESSYSPSPKEAERKRKE) is disordered. Positions 354 to 397 (EEGLCSEQERLRSEISELTQELHQKEVTIATVMKKAALLERQLK) form a coiled coil. The residue at position 544 (S544) is a Phosphoserine. Residues 555-586 (AAQHFLMEEERRAKELEKLLNTHIDELQRHTE) are a coiled coil.

This sequence belongs to the CEP63 family. In terms of assembly, interacts with CEP152; the interaction is mutually exclusive with CEP63. Highly enriched in multicilia-abundant tissues (trachea and oviduct).

The protein localises to the cytoplasm. Key structural component of the deuterosome, a structure that promotes de novo centriole amplification in multiciliated cells. Deuterosome-mediated centriole amplification occurs in terminally differentiated multiciliated cells and can generate more than 100 centrioles. Probably sufficient for the specification and formation of the deuterosome inner core. Interacts with CEP152 and recruits PLK4 to activate centriole biogenesis. This is Deuterosome assembly protein 1 from Mus musculus (Mouse).